We begin with the raw amino-acid sequence, 112 residues long: Large ribosomal subunit protein eL30 (112 aa).

This sequence belongs to the eukaryotic ribosomal protein eL30 family.

The protein is Large ribosomal subunit protein eL30 (RPL30) of Zea mays (Maize).